We begin with the raw amino-acid sequence, 158 residues long: uncharacterized protein (158 aa).

This is an uncharacterized protein from Caenorhabditis elegans.